A 394-amino-acid chain; its full sequence is Acid ceramidase (394 aa).

The first 20 residues, 1–20 (MLGRSLLTWVLAAAVTCAQA), serve as a signal peptide directing secretion. Cysteines 30 and 339 form a disulfide. Cys142 functions as the Nucleophile in the catalytic mechanism. 4 N-linked (GlcNAc...) asparagine glycosylation sites follow: Asn194, Asn258, Asn285, and Asn341. Cys387 and Cys391 are joined by a disulfide.

It belongs to the acid ceramidase family. Heterodimer; disulfide-linked. The heterodimer is composed of the disulfide-linked alpha and beta chains produced by autocatalytic cleavage of the precursor. In terms of processing, N-glycosylated. Post-translationally, proteolytically cleaved into two chains alpha and beta that remain associated via a disulfide bond. Cleavage gives rise to a conformation change that activates the enzyme. The same catalytic Cys residue mediates the autoproteolytic cleavage and subsequent hydrolysis of lipid substrates. The beta chain may undergo an additional C-terminal processing.

Its subcellular location is the lysosome. It localises to the secreted. The enzyme catalyses an N-acylsphing-4-enine + H2O = sphing-4-enine + a fatty acid. It catalyses the reaction N-dodecanoylsphing-4-enine + H2O = dodecanoate + sphing-4-enine. The catalysed reaction is N-tetradecanoylsphing-4-enine + H2O = tetradecanoate + sphing-4-enine. It carries out the reaction N-hexadecanoylsphing-4-enine + H2O = sphing-4-enine + hexadecanoate. The enzyme catalyses N-octadecanoylsphing-4-enine + H2O = sphing-4-enine + octadecanoate. It catalyses the reaction N-dodecanoyl-(4R)-hydroxysphinganine + H2O = (4R)-hydroxysphinganine + dodecanoate. The catalysed reaction is N-(dodecanoyl)-sphinganine + H2O = dodecanoate + sphinganine. It carries out the reaction N-(acetyl)-sphing-4-enine + H2O = sphing-4-enine + acetate. The enzyme catalyses N-(hexanoyl)sphing-4-enine + H2O = hexanoate + sphing-4-enine. It catalyses the reaction N-octanoylsphing-4-enine + H2O = octanoate + sphing-4-enine. The catalysed reaction is N-(9Z-octadecenoyl)-sphing-4-enine + H2O = sphing-4-enine + (9Z)-octadecenoate. It carries out the reaction N-dodecanoylethanolamine + H2O = dodecanoate + ethanolamine. The protein operates within lipid metabolism; sphingolipid metabolism. In terms of biological role, lysosomal ceramidase that hydrolyzes sphingolipid ceramides into sphingosine and free fatty acids at acidic pH. Ceramides, sphingosine, and its phosphorylated form sphingosine-1-phosphate are bioactive lipids that mediate cellular signaling pathways regulating several biological processes including cell proliferation, apoptosis and differentiation. Has a higher catalytic efficiency towards C12-ceramides versus other ceramides. Also catalyzes the reverse reaction allowing the synthesis of ceramides from fatty acids and sphingosine. For the reverse synthetic reaction, the natural sphingosine D-erythro isomer is more efficiently utilized as a substrate compared to D-erythro-dihydrosphingosine and D-erythro-phytosphingosine, while the fatty acids with chain lengths of 12 or 14 carbons are the most efficiently used. Also has an N-acylethanolamine hydrolase activity. By regulating the levels of ceramides, sphingosine and sphingosine-1-phosphate in the epidermis, mediates the calcium-induced differentiation of epidermal keratinocytes. Also indirectly regulates tumor necrosis factor/TNF-induced apoptosis. By regulating the intracellular balance between ceramides and sphingosine, in adrenocortical cells, probably also acts as a regulator of steroidogenesis. This is Acid ceramidase from Rattus norvegicus (Rat).